Here is a 643-residue protein sequence, read N- to C-terminus: MEKSSSCESLGSQPAAARPPSVDSLSSASTSHSENSVHTKSASVVSSDSISTSADNFSPDLRVLRESNKLAEMEEPPLLPGENIKDMAKDVTYICPFTGAVRGTLTVTNYRLYFKSMERDPPFVLDASLGVINRVEKIGGASSRGENSYGLETVCKDIRNLRFAHKPEGRTRRSIFENLMKYAFPVSNNLPLFAFEYKEVFPENGWKLYDPLLEYRRQGIPNESWRITKINERYELCDTYPALLVVPANIPDEELKRVASFRSRGRIPVLSWIHPESQATITRCSQPMVGVSGKRSKEDEKYLQAIMDSNAQSHKIFIFDARPSVNAVANKAKGGGYESEDAYQNAELVFLDIHNIHVMRESLRKLKEIVYPNIEETHWLSNLESTHWLEHIKLILAGALRIADKVESGKTSVVVHCSDGWDRTAQLTSLAMLMLDGYYRTIRGFEVLVEKEWLSFGHRFQLRVGHGDKNHADADRSPVFLQFIDCVWQMTRQFPTAFEFNEYFLITILDHLYSCLFGTFLCNSEQQRGKENLPKRTVSLWSYINSQLEDFTNPLYGSYSNHVLYPVASMRHLELWVGYYIRWNPRMKPQEPIHNRYKELLAKRAELQKKVEELQREISNRSTSSSERASSPAQCVTPVQTVV.

Polar residues-rich tracts occupy residues 1 to 12 (MEKSSSCESLGS) and 23 to 40 (DSLSSASTSHSENSVHTK). Positions 1–56 (MEKSSSCESLGSQPAAARPPSVDSLSSASTSHSENSVHTKSASVVSSDSISTSADN) are disordered. 2 positions are modified to phosphoserine: Ser-6 and Ser-9. Over residues 41-55 (SASVVSSDSISTSAD) the composition is skewed to low complexity. The residue at position 58 (Ser-58) is a Phosphoserine. Residues 68 to 139 (NKLAEMEEPP…GVINRVEKIG (72 aa)) form the GRAM domain. Positions 205 to 580 (GWKLYDPLLE…RHLELWVGYY (376 aa)) constitute a Myotubularin phosphatase domain. A 1,2-diacyl-sn-glycero-3-phospho-(1D-myo-inositol-3,5-bisphosphate) is bound by residues Asn-330, Asn-355, and Ile-356. A 1,2-diacyl-sn-glycero-3-phospho-(1D-myo-inositol-3-phosphate) is bound by residues Asn-330, Asn-355, and Ile-356. Cys-417 serves as the catalytic Phosphocysteine intermediate. Residues Ser-418, Asp-419, Gly-420, Trp-421, Asp-422, Arg-423, Arg-459, and Arg-463 each contribute to the a 1,2-diacyl-sn-glycero-3-phospho-(1D-myo-inositol-3,5-bisphosphate) site. 6 residues coordinate a 1,2-diacyl-sn-glycero-3-phospho-(1D-myo-inositol-3-phosphate): Ser-418, Asp-419, Gly-420, Trp-421, Asp-422, and Arg-423. Position 463 (Arg-463) interacts with a 1,2-diacyl-sn-glycero-3-phospho-(1D-myo-inositol-3-phosphate). The stretch at 593 to 627 (IHNRYKELLAKRAELQKKVEELQREISNRSTSSSE) forms a coiled coil. The tract at residues 615–643 (QREISNRSTSSSERASSPAQCVTPVQTVV) is disordered. Residues 620-631 (NRSTSSSERASS) show a composition bias toward low complexity. The segment covering 632–643 (PAQCVTPVQTVV) has biased composition (polar residues).

This sequence belongs to the protein-tyrosine phosphatase family. Non-receptor class myotubularin subfamily. In terms of assembly, homodimer (via coiled-coil domain). Heterotetramer consisting of one MTMR2 dimer and one SBF2/MTMR13 dimer; specifically in peripheral nerves stabilizes SBF2/MTMR13 at the membranes and increases MTMR2 catalytic activity towards phosphatidylinositol 3,5-bisphosphate and to a lesser extent towards phosphatidylinositol 3-phosphate. Heterodimer with SBF1/MTMR5; acts as an adapter for the phosphatase MTMR2 to regulate MTMR2 catalytic activity and subcellular location. Heterodimer with MTMR12. Phosphorylation at Ser-58 decreases MTMR2 localization to endocytic vesicular structures.

Its subcellular location is the cytoplasm. The protein resides in the early endosome membrane. It localises to the perinuclear region. The protein localises to the cell projection. It is found in the axon. Its subcellular location is the endosome membrane. The enzyme catalyses a 1,2-diacyl-sn-glycero-3-phospho-(1D-myo-inositol-3,5-bisphosphate) + H2O = a 1,2-diacyl-sn-glycero-3-phospho-(1D-myo-inositol-5-phosphate) + phosphate. The catalysed reaction is a 1,2-diacyl-sn-glycero-3-phospho-(1D-myo-inositol-3-phosphate) + H2O = a 1,2-diacyl-sn-glycero-3-phospho-(1D-myo-inositol) + phosphate. It carries out the reaction 1,2-dioctanoyl-sn-glycero-3-phospho-(1-D-myo-inositol-3-phosphate) + H2O = 1,2-dioctanoyl-sn-glycero-3-phospho-(1D-myo-inositol) + phosphate. It catalyses the reaction 1,2-dioctanoyl-sn-glycero-3-phospho-(1D-myo-inositol-3,5-bisphosphate) + H2O = 1,2-dioctanoyl-sn-glycero-3-phospho-(1D-myo-inositol-5-phosphate) + phosphate. Lipid phosphatase that specifically dephosphorylates the D-3 position of phosphatidylinositol 3-phosphate and phosphatidylinositol 3,5-bisphosphate, generating phosphatidylinositol and phosphatidylinositol 5-phosphate. Regulates the level of these phosphoinositides critical for various biological processes including autophagy initiation and autophagosome maturation. This is Phosphatidylinositol-3,5-bisphosphate 3-phosphatase MTMR2 from Homo sapiens (Human).